The sequence spans 157 residues: Nicotinate dehydrogenase small FeS subunit (157 aa).

Residues 4–80 form the 2Fe-2S ferredoxin-type domain; it reads ITINLNLNGE…ESTIITLEGV (77 aa). [2Fe-2S] cluster is bound by residues cysteine 42, cysteine 47, cysteine 50, cysteine 62, cysteine 101, cysteine 104, cysteine 136, and cysteine 138.

Heterooctamer of NDHM, NDHL, NDHS and NDHF. Dimer of heterotetramers. It depends on [2Fe-2S] cluster as a cofactor.

It carries out the reaction nicotinate + NADP(+) + H2O = 6-hydroxynicotinate + NADPH + H(+). The protein operates within cofactor degradation; nicotinate degradation; 6-hydroxynicotinate from nicotinate: step 1/1. With respect to regulation, reversibly inactivated by selenide and sulfide. Not inhibited by cyanide. Its function is as follows. Catalyzes the hydroxylation of nicotinate to 6-hydroxynicotinate. Also active against 2-pyrazinecarboxylic acid, but inactive against other nicotinate analogs. The polypeptide is Nicotinate dehydrogenase small FeS subunit (ndhS) (Eubacterium barkeri (Clostridium barkeri)).